Reading from the N-terminus, the 536-residue chain is Bifunctional purine biosynthesis protein PurH (536 aa).

The region spanning 8–158 (IPAPDEVRIK…KNHAYVTVVT (151 aa)) is the MGS-like domain.

It belongs to the PurH family.

The enzyme catalyses (6R)-10-formyltetrahydrofolate + 5-amino-1-(5-phospho-beta-D-ribosyl)imidazole-4-carboxamide = 5-formamido-1-(5-phospho-D-ribosyl)imidazole-4-carboxamide + (6S)-5,6,7,8-tetrahydrofolate. It carries out the reaction IMP + H2O = 5-formamido-1-(5-phospho-D-ribosyl)imidazole-4-carboxamide. The protein operates within purine metabolism; IMP biosynthesis via de novo pathway; 5-formamido-1-(5-phospho-D-ribosyl)imidazole-4-carboxamide from 5-amino-1-(5-phospho-D-ribosyl)imidazole-4-carboxamide (10-formyl THF route): step 1/1. It functions in the pathway purine metabolism; IMP biosynthesis via de novo pathway; IMP from 5-formamido-1-(5-phospho-D-ribosyl)imidazole-4-carboxamide: step 1/1. The polypeptide is Bifunctional purine biosynthesis protein PurH (Sinorhizobium medicae (strain WSM419) (Ensifer medicae)).